Reading from the N-terminus, the 472-residue chain is Tryptophanase (472 aa).

K270 is subject to N6-(pyridoxal phosphate)lysine.

The protein belongs to the beta-eliminating lyase family. In terms of assembly, homotetramer. Requires pyridoxal 5'-phosphate as cofactor.

The catalysed reaction is L-tryptophan + H2O = indole + pyruvate + NH4(+). The protein operates within amino-acid degradation; L-tryptophan degradation via pyruvate pathway; indole and pyruvate from L-tryptophan: step 1/1. The protein is Tryptophanase (tnaA) of Vibrio cholerae serotype O1 (strain ATCC 39315 / El Tor Inaba N16961).